A 2878-amino-acid polypeptide reads, in one-letter code: Trinucleotide repeat-containing gene 18 protein (2878 aa).

2 disordered regions span residues 1–54 and 102–194; these read MDGR…KYMA and TQKD…SSRL. Residues 119 to 128 show a composition bias toward polar residues; that stretch reads TPSSRTPSGH. Basic and acidic residues-rich tracts occupy residues 137–149, 158–169, and 179–194; these read SSRE…RAGR, GKKDPRAREEVS, and QEAR…SSRL. A Phosphoserine modification is found at serine 199. Disordered stretches follow at residues 259-289, 313-442, 487-507, 540-655, 865-1002, 1033-1104, 1127-1146, 1171-1228, 1429-1535, 1613-1668, 1694-1718, and 1737-1787; these read ARPC…AGVY, FDER…KWKP, MPRA…AAHG, SPFG…DDEC, AQEH…ALFT, ADGL…LESP, LEAQ…SEVS, LGTQ…DCDL, ELVK…DSSS, LGLS…DEDE, VPKN…RTLK, and EARS…GEQA. A compositionally biased stretch (pro residues) spans 264-283; sequence SPLPPPPPLPPKGPPAPPSS. Composition is skewed to basic and acidic residues over residues 327–337 and 350–362; these read RDVRAREREPG and RLER…EKSS. Residues 376–390 show a composition bias toward low complexity; sequence PPAARSSRSSPDARA. Positions 396 to 411 are enriched in basic and acidic residues; sequence ELLKPEADPRPCERAP. Serine 540 carries the phosphoserine modification. A Glycyl lysine isopeptide (Lys-Gly) (interchain with G-Cter in SUMO2) cross-link involves residue lysine 549. 2 stretches are compositionally biased toward basic and acidic residues: residues 580 to 589 and 865 to 881; these read LKRDPERPES and AQEH…KRSL. The segment covering 958 to 969 has biased composition (pro residues); the sequence is SSPPPASPPPTP. Residues 972–993 are compositionally biased toward basic and acidic residues; sequence TRKEEAPENVVEKKDLELEKET. Phosphoserine occurs at positions 1053 and 1062. The span at 1068–1088 shows a compositional bias: basic and acidic residues; the sequence is EPPRDSPEEEQLADREVKAEV. Positions 1410–1442 form a coiled coil; it reads LDFRMRLAEVQRRYKEKQRELVKLQRRRDSGDR. Residues 1429–1448 show a composition bias toward basic and acidic residues; it reads ELVKLQRRRDSGDRHEDAHR. The span at 1449–1463 shows a compositional bias: basic residues; sequence SLARRGPGRPRKRTH. Residue serine 1469 is modified to Phosphoserine. The segment covering 1478 to 1492 has biased composition (low complexity); it reads SSSGKGLSSKSLLTS. Over residues 1745–1775 the composition is skewed to acidic residues; it reads SSEEDSFDQDDSSEEEEEELEEEEEDEEEEG. Phosphoserine is present on residues serine 1789 and serine 1795. Basic and acidic residues predominate over residues 1825 to 1835; the sequence is EQKARKKEERQ. 3 disordered regions span residues 1825–2040, 2052–2080, and 2226–2681; these read EQKA…GAVS, FEAN…TPAP, and LLVP…RLPS. Residues 1876 to 1890 show a composition bias toward low complexity; the sequence is AAPGPGSRASGPSSP. Basic and acidic residues-rich tracts occupy residues 1891 to 1900, 1925 to 1936, 1966 to 1978, and 2024 to 2034; these read DKAKLVSEKG, LWTRRRSERIFL, PRKD…DRKD, and RGKEAKKENRG. Threonine 2077 is modified (phosphothreonine). Residues 2238–2247 show a composition bias toward basic and acidic residues; that stretch reads TSKDTGEVKE. Over residues 2261–2270 the composition is skewed to basic residues; it reads ARGRGRKPST. 2 stretches are compositionally biased toward basic and acidic residues: residues 2307-2316 and 2409-2419; these read STPEPVDKRA and AKEALLLREDP. Composition is skewed to low complexity over residues 2460–2470, 2491–2520, and 2540–2578; these read EPGPGLPLEDP, TTSS…SGSE, and RTCS…SSST. Positions 2579 to 2591 are enriched in acidic residues; that stretch reads TDEDSSCSSDEEA. The span at 2631–2641 shows a compositional bias: pro residues; that stretch reads TQPPPQPPPQP. Serine 2681 bears the Phosphoserine mark. One can recognise a BAH domain in the interval 2727–2872; it reads EMIRIGDCAV…PTTGMIFSTD (146 aa).

The sequence is that of Trinucleotide repeat-containing gene 18 protein (Tnrc18) from Mus musculus (Mouse).